We begin with the raw amino-acid sequence, 182 residues long: Guanylate kinase (182 aa).

The 179-residue stretch at 2–180 (GTLTVITGPS…ALLKLEGLMG (179 aa)) folds into the Guanylate kinase-like domain. 9-16 (GPSGVGKG) is a binding site for ATP.

The protein belongs to the guanylate kinase family.

The protein resides in the cytoplasm. It catalyses the reaction GMP + ATP = GDP + ADP. It carries out the reaction dZMP + ATP = dZDP + ADP. It functions in the pathway purine metabolism. Essential for recycling GMP and indirectly, cGMP. Functionally, (Microbial infection) Catalyzes the phosphorylation of dZMP to dZDP, when the bacterium is infected by a phage that produces the substrate for the synthesis of dZTP (2- amino-2'-deoxyadenosine 5'-triphosphate), which is then used by the phage as a DNA polymerase substrate. The polypeptide is Guanylate kinase (Parasynechococcus marenigrum (strain WH8102)).